Reading from the N-terminus, the 190-residue chain is Peptidyl-prolyl cis-trans isomerase A (190 aa).

Residues 1-24 (MFKSTLAAMAAVFALSALSPAAMA) form the signal peptide. The 162-residue stretch at 27-188 (GDPHVLLTTS…KPVVILSAKV (162 aa)) folds into the PPIase cyclophilin-type domain.

This sequence belongs to the cyclophilin-type PPIase family.

It is found in the periplasm. It catalyses the reaction [protein]-peptidylproline (omega=180) = [protein]-peptidylproline (omega=0). PPIases accelerate the folding of proteins. It catalyzes the cis-trans isomerization of proline imidic peptide bonds in oligopeptides. This is Peptidyl-prolyl cis-trans isomerase A (ppiA) from Escherichia coli O157:H7.